The sequence spans 339 residues: GTP 3',8-cyclase (339 aa).

The Radical SAM core domain occupies 13 to 249; that stretch reads RYGRPLRDLR…GEVAQRHAFA (237 aa). A GTP-binding site is contributed by arginine 22. The [4Fe-4S] cluster site is built by cysteine 29 and cysteine 33. Tyrosine 35 is a binding site for S-adenosyl-L-methionine. Cysteine 36 contributes to the [4Fe-4S] cluster binding site. Residue arginine 75 participates in GTP binding. Residue glycine 79 coordinates S-adenosyl-L-methionine. Threonine 106 contributes to the GTP binding site. Serine 130 lines the S-adenosyl-L-methionine pocket. Lysine 168 serves as a coordination point for GTP. Residue methionine 202 coordinates S-adenosyl-L-methionine. The [4Fe-4S] cluster site is built by cysteine 266 and cysteine 269. Residue 271-273 participates in GTP binding; sequence RAR. Residue cysteine 283 coordinates [4Fe-4S] cluster.

The protein belongs to the radical SAM superfamily. MoaA family. Monomer and homodimer. Requires [4Fe-4S] cluster as cofactor.

It catalyses the reaction GTP + AH2 + S-adenosyl-L-methionine = (8S)-3',8-cyclo-7,8-dihydroguanosine 5'-triphosphate + 5'-deoxyadenosine + L-methionine + A + H(+). Its pathway is cofactor biosynthesis; molybdopterin biosynthesis. Its function is as follows. Catalyzes the cyclization of GTP to (8S)-3',8-cyclo-7,8-dihydroguanosine 5'-triphosphate. The sequence is that of GTP 3',8-cyclase from Xanthomonas campestris pv. campestris (strain B100).